The chain runs to 366 residues: Quinolinate synthase (366 aa).

2 residues coordinate iminosuccinate: histidine 44 and serine 61. Cysteine 108 contacts [4Fe-4S] cluster. Residues 139 to 141 and serine 160 each bind iminosuccinate; that span reads YIN. Cysteine 228 is a binding site for [4Fe-4S] cluster. Iminosuccinate contacts are provided by residues 254 to 256 and threonine 271; that span reads HPE. Cysteine 318 is a [4Fe-4S] cluster binding site.

The protein belongs to the quinolinate synthase family. Type 3 subfamily. Requires [4Fe-4S] cluster as cofactor.

The protein localises to the cytoplasm. It carries out the reaction iminosuccinate + dihydroxyacetone phosphate = quinolinate + phosphate + 2 H2O + H(+). It participates in cofactor biosynthesis; NAD(+) biosynthesis; quinolinate from iminoaspartate: step 1/1. In terms of biological role, catalyzes the condensation of iminoaspartate with dihydroxyacetone phosphate to form quinolinate. The polypeptide is Quinolinate synthase (Listeria monocytogenes serovar 1/2a (strain ATCC BAA-679 / EGD-e)).